Consider the following 801-residue polypeptide: Probable inorganic carbon transporter subunit DabA (801 aa).

The Zn(2+) site is built by C332, D334, H500, and C515.

This sequence belongs to the inorganic carbon transporter (TC 9.A.2) DabA family. In terms of assembly, forms a complex with DabB. Requires Zn(2+) as cofactor.

The protein resides in the cell inner membrane. In terms of biological role, part of an energy-coupled inorganic carbon pump. In Marinobacter nauticus (strain ATCC 700491 / DSM 11845 / VT8) (Marinobacter aquaeolei), this protein is Probable inorganic carbon transporter subunit DabA.